The sequence spans 256 residues: Imidazole glycerol phosphate synthase subunit HisF (256 aa).

Residues aspartate 12 and aspartate 131 contribute to the active site.

The protein belongs to the HisA/HisF family. As to quaternary structure, heterodimer of HisH and HisF.

The protein localises to the cytoplasm. The enzyme catalyses 5-[(5-phospho-1-deoxy-D-ribulos-1-ylimino)methylamino]-1-(5-phospho-beta-D-ribosyl)imidazole-4-carboxamide + L-glutamine = D-erythro-1-(imidazol-4-yl)glycerol 3-phosphate + 5-amino-1-(5-phospho-beta-D-ribosyl)imidazole-4-carboxamide + L-glutamate + H(+). Its pathway is amino-acid biosynthesis; L-histidine biosynthesis; L-histidine from 5-phospho-alpha-D-ribose 1-diphosphate: step 5/9. IGPS catalyzes the conversion of PRFAR and glutamine to IGP, AICAR and glutamate. The HisF subunit catalyzes the cyclization activity that produces IGP and AICAR from PRFAR using the ammonia provided by the HisH subunit. The chain is Imidazole glycerol phosphate synthase subunit HisF from Pseudomonas fluorescens (strain ATCC BAA-477 / NRRL B-23932 / Pf-5).